The primary structure comprises 363 residues: GTPase Obg (363 aa).

In terms of domain architecture, Obg spans 1–159; it reads MKFVDEAFID…KSLKLELKVL (159 aa). The region spanning 160-341 is the OBG-type G domain; sequence ADVGLLGRPN…LVHAIFGHVQ (182 aa). Residues 166 to 173, 191 to 195, 213 to 216, 291 to 294, and 322 to 324 contribute to the GTP site; these read GRPNAGKS, FTTLH, DIPG, NKLD, and SAL. 2 residues coordinate Mg(2+): S173 and T193. Residues 343–363 form a disordered region; sequence GQRMDNEPPPLDPRFASAGPA.

The protein belongs to the TRAFAC class OBG-HflX-like GTPase superfamily. OBG GTPase family. Monomer. Requires Mg(2+) as cofactor.

It is found in the cytoplasm. In terms of biological role, an essential GTPase which binds GTP, GDP and possibly (p)ppGpp with moderate affinity, with high nucleotide exchange rates and a fairly low GTP hydrolysis rate. Plays a role in control of the cell cycle, stress response, ribosome biogenesis and in those bacteria that undergo differentiation, in morphogenesis control. This Verminephrobacter eiseniae (strain EF01-2) protein is GTPase Obg.